Reading from the N-terminus, the 301-residue chain is Ornithine carbamoyltransferase (301 aa).

Carbamoyl phosphate is bound by residues R100 and 127–130 (HPCQ). L-ornithine is bound by residues N158, D221, and 225–226 (SM). Residues 260–261 (CL) and R288 each bind carbamoyl phosphate.

This sequence belongs to the aspartate/ornithine carbamoyltransferase superfamily. OTCase family.

The protein localises to the cytoplasm. It catalyses the reaction carbamoyl phosphate + L-ornithine = L-citrulline + phosphate + H(+). It participates in amino-acid biosynthesis; L-arginine biosynthesis; L-arginine from L-ornithine and carbamoyl phosphate: step 1/3. In terms of biological role, reversibly catalyzes the transfer of the carbamoyl group from carbamoyl phosphate (CP) to the N(epsilon) atom of ornithine (ORN) to produce L-citrulline. This Shewanella oneidensis (strain ATCC 700550 / JCM 31522 / CIP 106686 / LMG 19005 / NCIMB 14063 / MR-1) protein is Ornithine carbamoyltransferase.